A 187-amino-acid polypeptide reads, in one-letter code: GTP cyclohydrolase 1 (187 aa).

Residues cysteine 81, histidine 84, and cysteine 152 each contribute to the Zn(2+) site.

This sequence belongs to the GTP cyclohydrolase I family. In terms of assembly, toroid-shaped homodecamer, composed of two pentamers of five dimers.

The enzyme catalyses GTP + H2O = 7,8-dihydroneopterin 3'-triphosphate + formate + H(+). Its pathway is cofactor biosynthesis; 7,8-dihydroneopterin triphosphate biosynthesis; 7,8-dihydroneopterin triphosphate from GTP: step 1/1. The chain is GTP cyclohydrolase 1 from Pyrobaculum aerophilum (strain ATCC 51768 / DSM 7523 / JCM 9630 / CIP 104966 / NBRC 100827 / IM2).